Consider the following 231-residue polypeptide: Probable cell wall protein ARB_06477 (231 aa).

A signal peptide spans 1–17; that stretch reads MRSVLYLLFTAVAAVAA. A disordered region spans residues 107–206; that stretch reads TPSFMVDGAT…TGMPTSSGAP (100 aa). A compositionally biased stretch (low complexity) spans 121-204; sequence TGPTTSRTSM…SSTGMPTSSG (84 aa). A lipid anchor (GPI-anchor amidated serine) is attached at Ser203. Residues 204–231 constitute a propeptide, removed in mature form; that stretch reads GAPDPNGAVSLALPGGLLSIVLSLMALL.

The protein belongs to the SRP1/TIP1 family. In terms of processing, the GPI-anchor is attached to the protein in the endoplasmic reticulum and serves to target the protein to the cell surface. There, the glucosamine-inositol phospholipid moiety is cleaved off and the GPI-modified mannoprotein is covalently attached via its lipidless GPI glycan remnant to the 1,6-beta-glucan of the outer cell wall layer.

It localises to the cell membrane. The protein resides in the secreted. Its subcellular location is the cell wall. In terms of biological role, probable component of the cell wall. The sequence is that of Probable cell wall protein ARB_06477 from Arthroderma benhamiae (strain ATCC MYA-4681 / CBS 112371) (Trichophyton mentagrophytes).